The following is a 411-amino-acid chain: MPKVLAIVLAGGKGERLFPLTSFRSKPSVPFGARYRIVDFVLSNLVNSQIYSIYLLVQYKSQSLIEHIRQNWFFSSVGSDHFVTVVPPQMRMGPEWFQGTADAVFQNIGLIKEHNPDIVLIFGADHIYRMDIRQMIKFHIENNAHVTVAARPVALKHASSFGVIITDPDHRIAGFQEKPKDPIPMPDNPDMAYVSMGNYIFNADILIDALVRAEKKKQHDFGAHVIPDLVGRKCKVYAYDFAKNEIPGIKSYEERGYWRDVGTISAYFDAHMDMLGEKPIFEIYNKMWPIHPARYEGPPVKILDGEIKNSIIAEGALIYGGKIENSFIRSGSIIEKDVEIKDSLIMDDVIIKRNSKLYRVIVDKKNVVYEGEKIGFSAEQDRFRCYIDSSGICILPRAARYNDWIKEINHA.

Residues Gly-162, 177–178 (EK), and Ser-195 contribute to the alpha-D-glucose 1-phosphate site.

Belongs to the bacterial/plant glucose-1-phosphate adenylyltransferase family. In terms of assembly, homotetramer.

The catalysed reaction is alpha-D-glucose 1-phosphate + ATP + H(+) = ADP-alpha-D-glucose + diphosphate. The protein operates within glycan biosynthesis; glycogen biosynthesis. Involved in the biosynthesis of ADP-glucose, a building block required for the elongation reactions to produce glycogen. Catalyzes the reaction between ATP and alpha-D-glucose 1-phosphate (G1P) to produce pyrophosphate and ADP-Glc. The sequence is that of Glucose-1-phosphate adenylyltransferase from Thermodesulfovibrio yellowstonii (strain ATCC 51303 / DSM 11347 / YP87).